The following is a 184-amino-acid chain: GMP synthase [glutamine-hydrolyzing] subunit A (184 aa).

In terms of domain architecture, Glutamine amidotransferase type-1 spans 3–184 (PICVVNNYGQ…YENFDAICTE (182 aa)). The Nucleophile role is filled by Cys75. Active-site residues include His162 and Glu164.

As to quaternary structure, heterodimer composed of a glutamine amidotransferase subunit (A) and a GMP-binding subunit (B).

It catalyses the reaction XMP + L-glutamine + ATP + H2O = GMP + L-glutamate + AMP + diphosphate + 2 H(+). Its pathway is purine metabolism; GMP biosynthesis; GMP from XMP (L-Gln route): step 1/1. Catalyzes the synthesis of GMP from XMP. The sequence is that of GMP synthase [glutamine-hydrolyzing] subunit A from Methanoregula boonei (strain DSM 21154 / JCM 14090 / 6A8).